The chain runs to 98 residues: Citrate lyase acyl carrier protein (98 aa).

The residue at position 14 (Ser-14) is an O-(phosphoribosyl dephospho-coenzyme A)serine.

The protein belongs to the CitD family. In terms of assembly, oligomer with a subunit composition of (alpha,beta,gamma)6.

Its subcellular location is the cytoplasm. Covalent carrier of the coenzyme of citrate lyase. This Salmonella arizonae (strain ATCC BAA-731 / CDC346-86 / RSK2980) protein is Citrate lyase acyl carrier protein.